A 492-amino-acid chain; its full sequence is N-succinylglutamate 5-semialdehyde dehydrogenase (492 aa).

220 to 225 (GSANTG) provides a ligand contact to NAD(+). Catalysis depends on residues Glu-243 and Cys-277.

The protein belongs to the aldehyde dehydrogenase family. AstD subfamily.

The enzyme catalyses N-succinyl-L-glutamate 5-semialdehyde + NAD(+) + H2O = N-succinyl-L-glutamate + NADH + 2 H(+). The protein operates within amino-acid degradation; L-arginine degradation via AST pathway; L-glutamate and succinate from L-arginine: step 4/5. In terms of biological role, catalyzes the NAD-dependent reduction of succinylglutamate semialdehyde into succinylglutamate. In Shigella flexneri serotype 5b (strain 8401), this protein is N-succinylglutamate 5-semialdehyde dehydrogenase.